Consider the following 151-residue polypeptide: Large ribosomal subunit protein uL22 (151 aa).

The span at 1 to 18 (MARINYSINADPENTSKA) shows a compositional bias: polar residues. Residues 1–23 (MARINYSINADPENTSKAMGSEL) form a disordered region.

It belongs to the universal ribosomal protein uL22 family. In terms of assembly, part of the 50S ribosomal subunit.

In terms of biological role, this protein binds specifically to 23S rRNA. It makes multiple contacts with different domains of the 23S rRNA in the assembled 50S subunit and ribosome. The globular domain of the protein is located near the polypeptide exit tunnel on the outside of the subunit, while an extended beta-hairpin is found that lines the wall of the exit tunnel in the center of the 70S ribosome. This chain is Large ribosomal subunit protein uL22, found in Methanosarcina mazei (strain ATCC BAA-159 / DSM 3647 / Goe1 / Go1 / JCM 11833 / OCM 88) (Methanosarcina frisia).